The primary structure comprises 511 residues: MEQAQWVDPALFSAFVSIIFFFLGMFLGRISLGVGKGAAPRSPSSTEWPDGPPKLPIIGNLHQLNKGGELVHHKLAKLAQSYDRAMTIWVGSWGPMIVVSDADLAWEVLVTKSPDFAGRVLSKLSHLFNADYNTVVAYDAGPQWQSLRRGLQHGPLGPAHVSAQARFHEEDMKLLVSDMMRAAKKGGNNGVVEPLAYVRRATIRFLSRLCFGEAFNDEAFVEGMDEAVEETIRATGHARILDAFYFTRHLPIIRRSFMNTVAAKKKIESLVRPLLSRPAPPGSYLHFLLSTDAPESMIIFRIFEVYLLGVDSTASTTTWALAFLVSNQQAQEKLHNELAQYCASQNNQNIKAEDVGKLSYLLGVVKETMRMKPIAPLAVPHKTLKETMLDGKRVAAGTTVVVNLYAVHYNPKLWPEPEQFRPERFVIGASGGNGGGSSEYMLQSYLPFGGGMRACAGMEVGKLQVAMVVANLVMSFKWLPEAEGKMPDLAEDMTFVLMMKKPLAAKIVPRA.

The helical transmembrane segment at 7 to 27 (VDPALFSAFVSIIFFFLGMFL) threads the bilayer. Cys455 is a binding site for heme.

Belongs to the cytochrome P450 family. Heme is required as a cofactor. As to expression, specifically expressed in immature fruits and roots. Barely detectable in young leaves and flowering spadices.

It localises to the membrane. The protein resides in the endoplasmic reticulum membrane. The enzyme catalyses (E,E)-feruperate + reduced [NADPH--hemoprotein reductase] + O2 = (E,E)-piperate + oxidized [NADPH--hemoprotein reductase] + 2 H2O + H(+). It functions in the pathway aromatic compound metabolism. Its function is as follows. Cytochrome P450 monooxygenase involved in the biosynthesis of aromatic piperamides natural products such as piperine (1-piperoyl-piperidine), the pungent principle contributing, together with several terpenoids, to the aromatic properties of black pepper fruits, and displaying numerous pharmacological activities such as antiproliferative, antitumor, antiangiogenesis, antioxidant, antidiabetic, antiobesity, cardioprotective, antimicrobial, antiaging, and immunomodulatory effects. Catalyzes the conversion of feruperic acid (5-(4-hydroxy-3-methoxyphenyl)-2,4-pentadienoic acid) to piperic acid. Inactive toward ferulic acid and feruperine. This Piper nigrum (Black pepper) protein is Piperic acid synthase CYP719A37.